Consider the following 273-residue polypeptide: Alkaline ceramidase 1 (273 aa).

At 1–36 (MHVPGTRAKMSSIFAYQSSEVDWCESNFQHSELVAE) the chain is on the lumenal side. 5 residues coordinate Ca(2+): Asp-22, Trp-23, Glu-25, Asn-27, and Glu-36. The helical transmembrane segment at 37 to 57 (FYNTFSNVFFLIFGPLMMFLM) threads the bilayer. The Cytoplasmic portion of the chain corresponds to 58–72 (HPYAQKRTRCFYGVS). The next 2 membrane-spanning stretches (helical) occupy residues 73–93 (VLFM…SFLG) and 94–114 (QLLD…VWLP). His-86 is a binding site for Zn(2+). Over 115 to 126 (RCYFPKFVKGNR) the chain is Cytoplasmic. The helical transmembrane segment at 127–147 (FYFSCLVTITTIISTFLTFVK) threads the bilayer. Topologically, residues 148–149 (PT) are lumenal. A helical membrane pass occupies residues 150–167 (VNAYALNSIAIHILYIVR). Over 168 to 177 (TEYKKIRDDD) the chain is Cytoplasmic. The chain crosses the membrane as a helical span at residues 178–198 (LRHLIAVSVVLWAAALTSWIS). Over 199-215 (DRVLCSFWQRIHFYYLH) the chain is Lumenal. Zn(2+) contacts are provided by His-215 and His-219. A helical membrane pass occupies residues 216–236 (SIWHVLISITFPYGIVTMALV). The Cytoplasmic segment spans residues 237-273 (DAKYEMPDKTLKVHYWPRDSWVIGLPYVEIQENDKNC).

The protein belongs to the alkaline ceramidase family. Requires Zn(2+) as cofactor. Highly expressed in skin. Weakly or not expressed in other tissues. Expressed by granular layer of interfollicular epidermis, sebaceous glands and infundibulum.

Its subcellular location is the endoplasmic reticulum membrane. The catalysed reaction is an N-acylsphing-4-enine + H2O = sphing-4-enine + a fatty acid. It carries out the reaction N-tetracosanoyl-sphing-4-enine + H2O = tetracosanoate + sphing-4-enine. The enzyme catalyses an N-acylsphinganine + H2O = sphinganine + a fatty acid. It catalyses the reaction N-(9Z-octadecenoyl)-sphing-4-enine + H2O = sphing-4-enine + (9Z)-octadecenoate. The catalysed reaction is N-(15Z-tetracosenoyl)-sphing-4-enine + H2O = (15Z)-tetracosenoate + sphing-4-enine. It functions in the pathway lipid metabolism; sphingolipid metabolism. Its activity is regulated as follows. Inhibited by sphingosine. Inhibited by Mn(2+), Zn(2+), and Cu(2+) in a dose-dependent manner. Slightly activated by Ca(2+) in a dose-dependent manner. In terms of biological role, endoplasmic reticulum ceramidase that catalyzes the hydrolysis of ceramides into sphingosine and free fatty acids at alkaline pH. Ceramides, sphingosine, and its phosphorylated form sphingosine-1-phosphate are bioactive lipids that mediate cellular signaling pathways regulating several biological processes including cell proliferation, apoptosis and differentiation. Exhibits a strong substrate specificity towards the natural stereoisomer of ceramides with D-erythro-sphingosine as a backbone and has a higher activity towards very long-chain unsaturated fatty acids like the C24:1-ceramide. May also hydrolyze dihydroceramides to produce dihydrosphingosine. ACER1 is a skin-specific ceramidase that regulates the levels of ceramides, sphingosine and sphingosine-1-phosphate in the epidermis, mediates the calcium-induced differentiation of epidermal keratinocytes and more generally plays an important role in skin homeostasis. The protein is Alkaline ceramidase 1 of Mus musculus (Mouse).